Here is a 286-residue protein sequence, read N- to C-terminus: Undecaprenyl-diphosphatase (286 aa).

The next 7 membrane-spanning stretches (helical) occupy residues 50–70 (PGVS…IAYF), 97–117 (LGIA…AIKL), 127–147 (LRSV…LALA), 165–185 (GLLV…RSGS), 200–220 (AARF…LVEL), 230–250 (GGVL…WLAI), and 262–282 (TWVF…WWAG).

Belongs to the UppP family.

Its subcellular location is the cell inner membrane. It catalyses the reaction di-trans,octa-cis-undecaprenyl diphosphate + H2O = di-trans,octa-cis-undecaprenyl phosphate + phosphate + H(+). Catalyzes the dephosphorylation of undecaprenyl diphosphate (UPP). Confers resistance to bacitracin. The chain is Undecaprenyl-diphosphatase from Synechococcus sp. (strain WH7803).